Consider the following 333-residue polypeptide: Structure-specific endonuclease subunit SLX1 homolog (333 aa).

Residues 68-157 enclose the GIY-YIG domain; sequence DFFGVYCLLS…KSRRLRLLNL (90 aa). An SLX1-type zinc finger spans residues 237 to 293; it reads CSLCLKPILSISELLRCHANETCKSHFHMRCLSKHALNAVDEYRTSLFPIQGQCPKC.

It belongs to the SLX1 family. As to quaternary structure, forms a heterodimer with a member of the SLX4 family. A divalent metal cation serves as cofactor.

The protein localises to the nucleus. Its function is as follows. Catalytic subunit of a heterodimeric structure-specific endonuclease that resolves DNA secondary structures generated during DNA repair and recombination. Has endonuclease activity towards branched DNA substrates, introducing single-strand cuts in duplex DNA close to junctions with ss-DNA. The polypeptide is Structure-specific endonuclease subunit SLX1 homolog (Brugia malayi (Filarial nematode worm)).